The chain runs to 331 residues: Hyaluronidase A (331 aa).

2 cysteine pairs are disulfide-bonded: C19–C308 and C185–C197. N-linked (GlcNAc...) asparagine glycans are attached at residues N79 and N99. Residue E109 is the Proton donor of the active site. N-linked (GlcNAc...) asparagine glycosylation is present at N127. N325 carries N-linked (GlcNAc...) asparagine glycosylation.

Belongs to the glycosyl hydrolase 56 family. Expressed by the venom gland.

It localises to the secreted. The enzyme catalyses Random hydrolysis of (1-&gt;4)-linkages between N-acetyl-beta-D-glucosamine and D-glucuronate residues in hyaluronate.. Hydrolyzes high molecular weight hyaluronic acid to produce small oligosaccharides. The protein is Hyaluronidase A of Vespula vulgaris (Yellow jacket).